The primary structure comprises 523 residues: Nondiscriminating glutamyl-tRNA synthetase EARS2, mitochondrial (523 aa).

The transit peptide at 1–41 (MAALLRRLLQRERPSAASGRPVGRREANLGTDAGVAVRVRF) directs the protein to the mitochondrion. 40–42 (RFA) contacts L-glutamate. The 'HIGH' region signature appears at 45–53 (PTGFLHLGG). H50 serves as a coordination point for ATP. L-glutamate-binding positions include E76, 228 to 232 (YHLAC), and R246. E249 serves as a coordination point for ATP. An N6-succinyllysine modification is found at K256. Position 284 to 288 (284 to 288 (KLSKR)) interacts with ATP. Positions 284 to 288 (KLSKR) match the 'KMSKS' region motif. An N6-acetyllysine modification is found at K486.

Belongs to the class-I aminoacyl-tRNA synthetase family. Glutamate--tRNA ligase type 1 subfamily.

The protein localises to the mitochondrion matrix. The enzyme catalyses tRNA(Glx) + L-glutamate + ATP = L-glutamyl-tRNA(Glx) + AMP + diphosphate. The catalysed reaction is tRNA(Glu) + L-glutamate + ATP = L-glutamyl-tRNA(Glu) + AMP + diphosphate. It carries out the reaction tRNA(Gln) + L-glutamate + ATP = L-glutamyl-tRNA(Gln) + AMP + diphosphate. In terms of biological role, non-discriminating glutamyl-tRNA synthetase that catalyzes aminoacylation of both mitochondrial tRNA(Glu) and tRNA(Gln) and participates in RNA aminoacylation for mitochondrial protein translation. Attachs glutamate to tRNA(Glu) or tRNA(Gln) in a two-step reaction: glutamate is first activated by ATP to form Glu-AMP and then transferred to the acceptor end of tRNA(Glu) or tRNA(Gln). In vitro, cytoplasmic tRNA(Gln) is slightly glutamylated, but with low activity. In Homo sapiens (Human), this protein is Nondiscriminating glutamyl-tRNA synthetase EARS2, mitochondrial.